Here is a 369-residue protein sequence, read N- to C-terminus: Transmembrane protein adipocyte-associated 1 (369 aa).

The N-linked (GlcNAc...) asparagine glycan is linked to asparagine 20. Helical transmembrane passes span 45–65, 73–93, 120–140, 148–168, 189–209, 237–257, and 262–282; these read LLLL…LPLA, SSPI…VGIA, FFLL…GHLE, VLAI…TLEI, QFWL…VILP, LLQG…LCCV, and FLYF…GFFG. Asparagine 329 carries an N-linked (GlcNAc...) asparagine glycan.

This sequence belongs to the UPF0359 family. As to expression, ubiquitous, with higher levels in heart, brain, lung, liver and kidney.

Its subcellular location is the membrane. The protein is Transmembrane protein adipocyte-associated 1 (Tpra1) of Mus musculus (Mouse).